The primary structure comprises 483 residues: Glutamate--tRNA ligase (483 aa).

A 'HIGH' region motif is present at residues 11–21; it reads PSPTGHLHIGN. The short motif at 252-256 is the 'KMSKS' region element; the sequence is KLSKR. Residue Lys-255 coordinates ATP.

This sequence belongs to the class-I aminoacyl-tRNA synthetase family. Glutamate--tRNA ligase type 1 subfamily. As to quaternary structure, monomer.

Its subcellular location is the cytoplasm. The catalysed reaction is tRNA(Glu) + L-glutamate + ATP = L-glutamyl-tRNA(Glu) + AMP + diphosphate. In terms of biological role, catalyzes the attachment of glutamate to tRNA(Glu) in a two-step reaction: glutamate is first activated by ATP to form Glu-AMP and then transferred to the acceptor end of tRNA(Glu). The protein is Glutamate--tRNA ligase of Bacillus velezensis (strain DSM 23117 / BGSC 10A6 / LMG 26770 / FZB42) (Bacillus amyloliquefaciens subsp. plantarum).